Here is a 200-residue protein sequence, read N- to C-terminus: 3-isopropylmalate dehydratase small subunit (200 aa).

This sequence belongs to the LeuD family. LeuD type 1 subfamily. As to quaternary structure, heterodimer of LeuC and LeuD.

The enzyme catalyses (2R,3S)-3-isopropylmalate = (2S)-2-isopropylmalate. It functions in the pathway amino-acid biosynthesis; L-leucine biosynthesis; L-leucine from 3-methyl-2-oxobutanoate: step 2/4. Catalyzes the isomerization between 2-isopropylmalate and 3-isopropylmalate, via the formation of 2-isopropylmaleate. The sequence is that of 3-isopropylmalate dehydratase small subunit from Yersinia pseudotuberculosis serotype I (strain IP32953).